The primary structure comprises 481 residues: RAC-beta serine/threonine-protein kinase (481 aa).

An N-acetylmethionine modification is found at Met-1. The region spanning 5–108 (SVIKEGWLHK…WMRAIQMVAN (104 aa)) is the PH domain. At Ser-34 the chain carries Phosphoserine. A disulfide bridge connects residues Cys-60 and Cys-77. Phosphoserine is present on Ser-126. O-linked (GlcNAc) serine glycosylation is found at Ser-128 and Ser-131. Residues 152 to 409 (FDYLKLLGKG…AKEVMEHRFF (258 aa)) enclose the Protein kinase domain. Residues 158 to 166 (LGKGTFGKV) and Lys-181 contribute to the ATP site. The active-site Proton acceptor is Asp-275. Asn-280 and Asp-293 together coordinate Mn(2+). Cys-297 and Cys-311 form a disulfide bridge. Thr-306 carries an O-linked (GlcNAc) threonine glycan. Position 309 is a phosphothreonine; by PDPK1 (Thr-309). O-linked (GlcNAc) threonine glycosylation occurs at Thr-313. The region spanning 410–481 (LSINWQDVVQ…QFSYSASIRE (72 aa)) is the AGC-kinase C-terminal domain. Ser-447 carries the post-translational modification Phosphoserine. A Phosphothreonine modification is found at Thr-451. Phosphoserine; by MTOR is present on residues Ser-474 and Ser-478. A glycan (O-linked (GlcNAc) serine; alternate) is linked at Ser-474.

This sequence belongs to the protein kinase superfamily. AGC Ser/Thr protein kinase family. RAC subfamily. In terms of assembly, interacts with BTBD10. Interacts with KCTD20. Interacts (via PH domain) with MTCP1, TCL1A and TCL1B; this interaction may facilitate AKT2 oligomerization and phosphorylation, hence increasing kinase activity. Interacts with PHB2; this interaction may be important for myogenic differentiation. Interacts (when phosphorylated) with CLIP3/ClipR-59; this interaction promotes cell membrane localization. Interacts with WDFY2 (via WD repeats 1-3). In terms of processing, phosphorylation on Thr-309 and Ser-474 is required for full activity. Phosphorylation of the activation loop at Thr-309 by PDPK1/PDK1 is a prerequisite for full activation. Phosphorylated and activated by PDPK1/PDK1 in the presence of phosphatidylinositol 3,4,5-trisphosphate. Phosphorylation by mTORC2 in response to growth factors plays a key role in AKT1 activation: mTORC2 phosphorylates different sites depending on the context, such as Ser-474 or Ser-478, thereby facilitating subsequent phosphorylation of the activation loop by PDPK1/PDK1. Ubiquitinated; undergoes both 'Lys-48'- and 'Lys-63'-linked polyubiquitination. TRAF6-induced 'Lys-63'-linked AKT2 ubiquitination. When fully phosphorylated and translocated into the nucleus, undergoes 'Lys-48'-polyubiquitination catalyzed by TTC3, leading to its degradation by the proteasome. Post-translationally, O-GlcNAcylation at Thr-306 and Thr-313 inhibits activating phosphorylation at Thr-309 via disrupting the interaction between AKT and PDPK1/PDK1.

The protein localises to the cytoplasm. It is found in the nucleus. The protein resides in the cell membrane. Its subcellular location is the early endosome. The enzyme catalyses L-seryl-[protein] + ATP = O-phospho-L-seryl-[protein] + ADP + H(+). The catalysed reaction is L-threonyl-[protein] + ATP = O-phospho-L-threonyl-[protein] + ADP + H(+). Its activity is regulated as follows. Two specific sites, one in the kinase domain (Thr-309) and the other in the C-terminal regulatory region (Ser-474), need to be phosphorylated for its full activation. AKT2 phosphorylation of PKP1 is induced by insulin. Inhibited by Akt inhibitor MK2206. Its function is as follows. AKT2 is one of 3 closely related serine/threonine-protein kinases (AKT1, AKT2 and AKT3) called the AKT kinases, and which regulate many processes including metabolism, proliferation, cell survival, growth and angiogenesis. This is mediated through serine and/or threonine phosphorylation of a range of downstream substrates. Over 100 substrate candidates have been reported so far, but for most of them, no isoform specificity has been reported. AKT is responsible of the regulation of glucose uptake by mediating insulin-induced translocation of the SLC2A4/GLUT4 glucose transporter to the cell surface. Phosphorylation of PTPN1 at 'Ser-50' negatively modulates its phosphatase activity preventing dephosphorylation of the insulin receptor and the attenuation of insulin signaling. Phosphorylation of TBC1D4 triggers the binding of this effector to inhibitory 14-3-3 proteins, which is required for insulin-stimulated glucose transport. AKT also regulates the storage of glucose in the form of glycogen by phosphorylating GSK3A at 'Ser-21' and GSK3B at 'Ser-9', resulting in inhibition of its kinase activity. Phosphorylation of GSK3 isoforms by AKT is also thought to be one mechanism by which cell proliferation is driven. AKT also regulates cell survival via the phosphorylation of MAP3K5 (apoptosis signal-related kinase). Phosphorylation of 'Ser-83' decreases MAP3K5 kinase activity stimulated by oxidative stress and thereby prevents apoptosis. AKT mediates insulin-stimulated protein synthesis by phosphorylating TSC2 at 'Ser-939' and 'Thr-1462', thereby activating mTORC1 signaling and leading to both phosphorylation of 4E-BP1 and in activation of RPS6KB1. AKT is involved in the phosphorylation of members of the FOXO factors (Forkhead family of transcription factors), leading to binding of 14-3-3 proteins and cytoplasmic localization. In particular, FOXO1 is phosphorylated at 'Thr-24', 'Ser-256' and 'Ser-319'. FOXO3 and FOXO4 are phosphorylated on equivalent sites. AKT has an important role in the regulation of NF-kappa-B-dependent gene transcription and positively regulates the activity of CREB1 (cyclic AMP (cAMP)-response element binding protein). The phosphorylation of CREB1 induces the binding of accessory proteins that are necessary for the transcription of pro-survival genes such as BCL2 and MCL1. AKT phosphorylates 'Ser-454' on ATP citrate lyase (ACLY), thereby potentially regulating ACLY activity and fatty acid synthesis. Activates the 3B isoform of cyclic nucleotide phosphodiesterase (PDE3B) via phosphorylation of 'Ser-273', resulting in reduced cyclic AMP levels and inhibition of lipolysis. Phosphorylates PIKFYVE on 'Ser-318', which results in increased PI(3)P-5 activity. The Rho GTPase-activating protein DLC1 is another substrate and its phosphorylation is implicated in the regulation cell proliferation and cell growth. AKT plays a role as key modulator of the AKT-mTOR signaling pathway controlling the tempo of the process of newborn neurons integration during adult neurogenesis, including correct neuron positioning, dendritic development and synapse formation. Signals downstream of phosphatidylinositol 3-kinase (PI(3)K) to mediate the effects of various growth factors such as platelet-derived growth factor (PDGF), epidermal growth factor (EGF), insulin and insulin-like growth factor I (IGF-I). AKT mediates the antiapoptotic effects of IGF-I. Essential for the SPATA13-mediated regulation of cell migration and adhesion assembly and disassembly. May be involved in the regulation of the placental development. In response to lysophosphatidic acid stimulation, inhibits the ciliogenesis cascade. In this context, phosphorylates WDR44, hence stabilizing its interaction with Rab11 and preventing the formation of the ciliogenic Rab11-FIP3-RAB3IP complex. Also phosphorylates RAB3IP/Rabin8, thus may affect RAB3IP guanine nucleotide exchange factor (GEF) activity toward Rab8, which is important for cilia growth. Phosphorylates PKP1, facilitating its interaction with YWHAG and translocation to the nucleus, ultimately resulting in a reduction in keratinocyte intercellular adhesion. Phosphorylation of PKP1 increases PKP1 protein stability, translocation to the cytoplasm away from desmosome plaques and PKP1-driven cap-dependent translation. In terms of biological role, several AKT2-specific substrates have been identified, including ANKRD2, C2CD5, CLK2 and PITX2. May play a role in myoblast differentiation. In this context, may act through PITX2 phosphorylation. Unphosphorylated PITX2 associates with an ELAVL1/HuR-containing complex, which stabilizes cyclin mRNA and ensuring cell proliferation. Phosphorylation by AKT2 impairs this association, leading to CCND1 mRNA destabilization and progression towards differentiation. Also involved in the negative regulation of myogenesis in response to stress conditions. In this context, acts by phosphorylating ANKRD2. May also be a key regulator of glucose uptake. Regulates insulin-stimulated glucose transport by the increase of glucose transporter GLUT4 translocation from intracellular stores to the plasma membrane. In this context, acts by phosphorylating C2CD5/CDP138 on 'Ser-197' in insulin-stimulated adipocytes. Through the phosphorylation of CLK2 on 'Thr-343', involved in insulin-regulated suppression of hepatic gluconeogenesis. This chain is RAC-beta serine/threonine-protein kinase (Akt2), found in Mus musculus (Mouse).